The chain runs to 318 residues: Small ribosomal subunit biogenesis GTPase RsgA (318 aa).

Residues 82–246 form the CP-type G domain; the sequence is RQDEIRTKSF…LIDSPGFQEF (165 aa). GTP-binding positions include 132-135 and 186-194; these read NKSD and GPSGAGKST. Residues Cys-270, Cys-275, His-277, and Cys-283 each contribute to the Zn(2+) site.

Belongs to the TRAFAC class YlqF/YawG GTPase family. RsgA subfamily. Monomer. Associates with 30S ribosomal subunit, binds 16S rRNA. The cofactor is Zn(2+).

The protein resides in the cytoplasm. Its function is as follows. One of several proteins that assist in the late maturation steps of the functional core of the 30S ribosomal subunit. Helps release RbfA from mature subunits. May play a role in the assembly of ribosomal proteins into the subunit. Circularly permuted GTPase that catalyzes slow GTP hydrolysis, GTPase activity is stimulated by the 30S ribosomal subunit. The chain is Small ribosomal subunit biogenesis GTPase RsgA from Variovorax paradoxus (strain S110).